Consider the following 198-residue polypeptide: Methyl-coenzyme M reductase operon protein C (198 aa).

MCR is composed of three subunits: alpha, beta, and gamma. The function of proteins C and D is not known.

The protein is Methyl-coenzyme M reductase operon protein C (mcrC) of Methanococcus vannielii.